We begin with the raw amino-acid sequence, 233 residues long: Large ribosomal subunit protein uL1 (233 aa).

This sequence belongs to the universal ribosomal protein uL1 family. As to quaternary structure, part of the 50S ribosomal subunit.

In terms of biological role, binds directly to 23S rRNA. The L1 stalk is quite mobile in the ribosome, and is involved in E site tRNA release. Its function is as follows. Protein L1 is also a translational repressor protein, it controls the translation of the L11 operon by binding to its mRNA. This is Large ribosomal subunit protein uL1 from Shewanella putrefaciens (strain CN-32 / ATCC BAA-453).